The chain runs to 440 residues: Proton extrusion protein PxcA (440 aa).

Helical transmembrane passes span 222 to 242 (FVLT…TFFL), 316 to 336 (NAIA…LVLV), 352 to 374 (IVYG…MFVG), and 400 to 420 (FNFL…KYWI).

It belongs to the CemA family.

It is found in the cell inner membrane. In terms of biological role, required for H(+) efflux immediately after light irradiation to form a rapid H(+) concentration gradient across the thylakoid membranes. Together with PxcL, contributes to transient H(+) uptake following dark to light transition. Involved in light-induced Na(+)-dependent proton extrusion. Also seems to be involved in CO(2) transport. The chain is Proton extrusion protein PxcA from Synechocystis sp. (strain ATCC 27184 / PCC 6803 / Kazusa).